Consider the following 664-residue polypeptide: Protein IQ-DOMAIN 28 (664 aa).

The disordered stretch occupies residues 1 to 85; that stretch reads MGKTPGKWIK…DESKDNLESR (85 aa). Residues 51-64 show a composition bias toward low complexity; the sequence is VDPPVVSSQPVPAS. The segment covering 76 to 85 has biased composition (basic and acidic residues); it reads DESKDNLESR. IQ domains lie at 93–121, 122–140, and 144–170; these read LEQA…GIIR, LQAV…ATYS, and GIVK…QKKH. Residues 106 to 116 are calmodulin-binding; it reads AHQARRAFRTL. 3 disordered regions span residues 244 to 488, 502 to 573, and 637 to 664; these read EIPK…KEKD, DEKS…SGRK, and AKGS…DWKR. The short motif at 251 to 258 is the Nuclear localization signal 1 element; the sequence is KKRNYQAV. The segment covering 305–315 has biased composition (basic and acidic residues); sequence DPLRNESDKAN. Residues 339–353 are compositionally biased toward low complexity; the sequence is SPSLKRSSLSNGSKK. A Nuclear localization signal 2 motif is present at residues 351-358; it reads SKKATLRS. Basic and acidic residues-rich tracts occupy residues 358–367, 427–447, and 502–532; these read SAEKKKKDIP, TEKE…KVLE, and DEKS…KCAD. A compositionally biased stretch (polar residues) spans 536–547; the sequence is SSENGNVGSDNT. Positions 652–664 are enriched in basic and acidic residues; it reads DITHKSTRTDWKR.

It belongs to the IQD family. Binds to multiple calmodulin (CaM) in the presence of Ca(2+) and CaM-like proteins.

The protein localises to the nucleus. It is found in the cytoplasm. Its subcellular location is the cytoskeleton. May be involved in cooperative interactions with calmodulins or calmodulin-like proteins. Recruits calmodulin proteins to microtubules, thus being a potential scaffold in cellular signaling and trafficking. May associate with nucleic acids and regulate gene expression at the transcriptional or post-transcriptional level. The chain is Protein IQ-DOMAIN 28 from Arabidopsis thaliana (Mouse-ear cress).